The sequence spans 473 residues: Kremen protein 1 (473 aa).

The N-terminal stretch at 1 to 19 (MAPPAARLALLSAAALTLA) is a signal peptide. Residues 21–392 (RPAPGPRSGP…ANSHRVEGWT (372 aa)) lie on the Extracellular side of the membrane. Residues 31–114 (ECFTANGADY…YWKYCEIPAC (84 aa)) enclose the Kringle domain. 8 disulfides stabilise this stretch: C32–C114, C55–C95, C84–C109, C122–C186, C147–C167, C151–C169, C190–C198, and C214–C240. N59 carries an N-linked (GlcNAc...) asparagine glycan. The region spanning 116 to 210 (MPGNLGCYKD…DGRIILFDTL (95 aa)) is the WSC domain. One can recognise a CUB domain in the interval 214–321 (CGGNYSAMAA…QGFAVLYQAT (108 aa)). Residues N217, N255, N293, N333, and N345 are each glycosylated (N-linked (GlcNAc...) asparagine). The chain crosses the membrane as a helical span at residues 393–413 (VYGLATLLILTVTAVVAKILL). At 414 to 473 (HVTFKSHRVPASGDLRDCRQPGASGDIWTIFYEPSTTISIFKKKLKGQSQQDDRNPLVSD) the chain is on the cytoplasmic side. The essential for apoptotic activity stretch occupies residues 414–473 (HVTFKSHRVPASGDLRDCRQPGASGDIWTIFYEPSTTISIFKKKLKGQSQQDDRNPLVSD).

As to quaternary structure, forms a ternary complex with DKK1 and LRP6. Interacts with LRP6 in a DKK1-dependent manner. Interacts with DKK1 and RSPO1 (via FU repeats). As to expression, in the adult, widely expressed with high levels in heart, lung, kidney, skeletal muscle and testis.

It localises to the cell membrane. In terms of biological role, receptor for Dickkopf proteins. Cooperates with DKK1/2 to inhibit Wnt/beta-catenin signaling by promoting the endocytosis of Wnt receptors LRP5 and LRP6. In the absence of DKK1, potentiates Wnt-beta-catenin signaling by maintaining LRP5 or LRP6 at the cell membrane. Can trigger apoptosis in a Wnt-independent manner and this apoptotic activity is inhibited upon binding of the ligand DKK1. Plays a role in limb development; attenuates Wnt signaling in the developing limb to allow normal limb patterning and can also negatively regulate bone formation. Modulates cell fate decisions in the developing cochlea with an inhibitory role in hair cell fate specification. This chain is Kremen protein 1 (Kremen1), found in Mus musculus (Mouse).